The following is a 92-amino-acid chain: Large ribosomal subunit protein eL37 (92 aa).

Positions 19, 22, 34, and 37 each coordinate Zn(2+). The C4-type zinc-finger motif lies at 19–37; the sequence is CRRCGRRSYHIQKSTCANC. Residues 50–92 form a disordered region; that stretch reads SEKAKRRKTTGSGRTAHLRDVHRRFKNGFQVGTPKGARGPENH.

It belongs to the eukaryotic ribosomal protein eL37 family. Zn(2+) serves as cofactor.

Binds to the 23S rRNA. This chain is Large ribosomal subunit protein eL37 (rpl37), found in Emericella nidulans (strain FGSC A4 / ATCC 38163 / CBS 112.46 / NRRL 194 / M139) (Aspergillus nidulans).